The primary structure comprises 89 residues: Large ribosomal subunit protein bL27 (89 aa).

The tract at residues 1-21 is disordered; that stretch reads MAHKKAGGSSRNGRDSESKRL.

It belongs to the bacterial ribosomal protein bL27 family.

The sequence is that of Large ribosomal subunit protein bL27 from Brucella anthropi (strain ATCC 49188 / DSM 6882 / CCUG 24695 / JCM 21032 / LMG 3331 / NBRC 15819 / NCTC 12168 / Alc 37) (Ochrobactrum anthropi).